The following is a 1078-amino-acid chain: Disheveled-associated activator of morphogenesis 1 (1078 aa).

At S34 the chain carries Phosphoserine. The 376-residue stretch at 45 to 420 (LPMPPVEELD…QIVIQNDKGQ (376 aa)) folds into the GBD/FH3 domain. A coiled-coil region spans residues 437-526 (RMLVNENEVK…ELSRRAVCAS (90 aa)). 2 disordered regions span residues 456 to 480 (RKEH…TQEK) and 524 to 585 (CASI…PLGA). The FH1 domain maps to 528 to 599 (PGGPSPGAPG…PGAPMGLALK (72 aa)). Pro residues-rich tracts occupy residues 530–539 (GPSPGAPGGP) and 548–585 (LLPP…PLGA). The 410-residue stretch at 600–1009 (KKSIPQPTNA…EERRARMEAQ (410 aa)) folds into the FH2 domain. The tract at residues 693–702 (AQNCNILLSR) is actin-binding. The span at 987–1027 (KQENENMRKKKEEEERRARMEAQLKEQRERERKMRKAKENS) shows a compositional bias: basic and acidic residues. Disordered regions lie at residues 987-1034 (KQEN…GEFD) and 1055-1078 (RNRK…KLNF). S1027 and S1030 each carry phosphoserine. A DAD domain is found at 1027-1058 (SEESGEFDDLVSALRSGEVFDKDLSKLKRNRK). Residues 1067–1078 (SSRERPITKLNF) are compositionally biased toward basic and acidic residues.

Belongs to the formin homology family. As to quaternary structure, homodimer. Interacts with CIP4, FNBP1 and FNBP1L. Interacts with the SH3 domains of Abl, BTK, endophilin, spectrin and SRC. Binds specifically to GTP-bound CDC42 and RHOA. Interacts with INTU; INTU mediates the indirect interaction between DAAM1 and NPHP4. Interacts (via coiled coil domain) with KANK1 (via coiled coil domain). As to expression, expressed in all tissues examined.

The protein localises to the cytoplasm. It is found in the cytoskeleton. Its subcellular location is the cilium basal body. Binds to disheveled (Dvl) and Rho, and mediates Wnt-induced Dvl-Rho complex formation. May play a role as a scaffolding protein to recruit Rho-GDP and Rho-GEF, thereby enhancing Rho-GTP formation. Can direct nucleation and elongation of new actin filaments. Involved in building functional cilia. Involved in the organization of the subapical actin network in multiciliated epithelial cells. Together with DAAM2, required for myocardial maturation and sarcomere assembly. During cell division, may regulate RHOA activation that signals spindle orientation and chromosomal segregation. The chain is Disheveled-associated activator of morphogenesis 1 (DAAM1) from Homo sapiens (Human).